We begin with the raw amino-acid sequence, 520 residues long: Cholesterol side-chain cleavage enzyme, mitochondrial (520 aa).

The N-terminal 39 residues, Met-1–Gly-39, are a transit peptide targeting the mitochondrion. Residue Cys-461 participates in heme binding.

The protein belongs to the cytochrome P450 family. In terms of assembly, interacts with FDX1/adrenodoxin. Heme is required as a cofactor. In terms of tissue distribution, detected in adrenal cortex and corpus luteum (at protein level).

It is found in the mitochondrion inner membrane. It carries out the reaction 6 reduced [adrenodoxin] + cholesterol + 3 O2 + 6 H(+) = 4-methylpentanal + pregnenolone + 6 oxidized [adrenodoxin] + 4 H2O. The enzyme catalyses 2 reduced [adrenodoxin] + cholesterol + O2 + 2 H(+) = (22R)-hydroxycholesterol + 2 oxidized [adrenodoxin] + H2O. It catalyses the reaction (22R)-hydroxycholesterol + 2 reduced [adrenodoxin] + O2 + 2 H(+) = (20R,22R)-20,22-dihydroxycholesterol + 2 oxidized [adrenodoxin] + H2O. The catalysed reaction is (20R,22R)-20,22-dihydroxycholesterol + 2 reduced [adrenodoxin] + O2 + 2 H(+) = 4-methylpentanal + pregnenolone + 2 oxidized [adrenodoxin] + 2 H2O. Its pathway is lipid metabolism; C21-steroid hormone metabolism. It participates in steroid metabolism; cholesterol metabolism. In terms of biological role, a cytochrome P450 monooxygenase that catalyzes the side-chain hydroxylation and cleavage of cholesterol to pregnenolone, the precursor of most steroid hormones. Catalyzes three sequential oxidation reactions of cholesterol, namely the hydroxylation at C22 followed with the hydroxylation at C20 to yield 20R,22R-hydroxycholesterol that is further cleaved between C20 and C22 to yield the C21-steroid pregnenolone and 4-methylpentanal. Mechanistically, uses molecular oxygen inserting one oxygen atom into a substrate and reducing the second into a water molecule. Two electrons are provided by NADPH via a two-protein mitochondrial transfer system comprising flavoprotein FDXR (adrenodoxin/ferredoxin reductase) and nonheme iron-sulfur protein FDX1 or FDX2 (adrenodoxin/ferredoxin). The polypeptide is Cholesterol side-chain cleavage enzyme, mitochondrial (CYP11A1) (Bos taurus (Bovine)).